We begin with the raw amino-acid sequence, 237 residues long: Carbonyl reductase family member 4 (237 aa).

NADP(+) is bound by residues 11–14 (SRGI), 34–35 (RN), Asp57, and 84–86 (AAG). Ser135 is a binding site for substrate. NADP(+) is bound by residues Tyr148, Lys152, and 181–183 (IHT). The Proton acceptor role is filled by Tyr148.

Belongs to the short-chain dehydrogenases/reductases (SDR) family. In terms of assembly, homotetramer (in vitro). Heterotetramer with HSD17B8; contains two molecules each of HSD17B8 and CBR4.

The protein localises to the mitochondrion matrix. It functions in the pathway lipid metabolism; fatty acid biosynthesis. In terms of biological role, the heterotetramer with HSD17B8 has NADH-dependent 3-ketoacyl-acyl carrier protein reductase activity, and thereby plays a role in mitochondrial fatty acid biosynthesis. Within the heterotetramer, HSD17B8 binds NADH; CBR4 binds NADPD. The homotetramer has NADPH-dependent quinone reductase activity. Both homotetramer and the heterotetramer have broad in vitro substrate specificity and can reduce 9,10-phenanthrenequinone, 1,4-benzoquinone and various other o-quinones and p-quinones. This is Carbonyl reductase family member 4 (cbr4) from Danio rerio (Zebrafish).